The sequence spans 175 residues: Co-chaperone protein HscB homolog (175 aa).

A J domain is found at 7–79; the sequence is SHFALFNLPE…LKRARYLLSL (73 aa).

It belongs to the HscB family. Interacts with HscA and stimulates its ATPase activity.

In terms of biological role, co-chaperone involved in the maturation of iron-sulfur cluster-containing proteins. Seems to help targeting proteins to be folded toward HscA. This Paraburkholderia phymatum (strain DSM 17167 / CIP 108236 / LMG 21445 / STM815) (Burkholderia phymatum) protein is Co-chaperone protein HscB homolog.